We begin with the raw amino-acid sequence, 486 residues long: Adenosylhomocysteinase (486 aa).

3 residues coordinate substrate: Thr63, Asp147, and Glu209. Residue 210 to 212 (TTT) participates in NAD(+) binding. Residues Lys239 and Asp243 each coordinate substrate. NAD(+) contacts are provided by residues Asn244, 273 to 278 (GYGDVG), Glu296, Asn331, 352 to 354 (IGH), and Asn400.

This sequence belongs to the adenosylhomocysteinase family. It depends on NAD(+) as a cofactor.

The catalysed reaction is S-adenosyl-L-homocysteine + H2O = L-homocysteine + adenosine. The protein operates within amino-acid biosynthesis; L-homocysteine biosynthesis; L-homocysteine from S-adenosyl-L-homocysteine: step 1/1. Adenosylhomocysteine is a competitive inhibitor of S-adenosyl-L-methionine-dependent methyl transferase reactions; therefore adenosylhomocysteinase may play a key role in the control of methylations via regulation of the intracellular concentration of adenosylhomocysteine. In Trichomonas vaginalis, this protein is Adenosylhomocysteinase.